A 267-amino-acid polypeptide reads, in one-letter code: 5'-nucleotidase SurE (267 aa).

Positions 9, 10, 40, and 97 each coordinate a divalent metal cation.

The protein belongs to the SurE nucleotidase family. It depends on a divalent metal cation as a cofactor.

It is found in the cytoplasm. The enzyme catalyses a ribonucleoside 5'-phosphate + H2O = a ribonucleoside + phosphate. In terms of biological role, nucleotidase that shows phosphatase activity on nucleoside 5'-monophosphates. The protein is 5'-nucleotidase SurE of Helicobacter pylori (strain G27).